Here is an 80-residue protein sequence, read N- to C-terminus: Large ribosomal subunit protein bL31B (80 aa).

This sequence belongs to the bacterial ribosomal protein bL31 family. Type B subfamily. In terms of assembly, part of the 50S ribosomal subunit.

In Xanthomonas campestris pv. campestris (strain 8004), this protein is Large ribosomal subunit protein bL31B.